Reading from the N-terminus, the 358-residue chain is Protein RecA (358 aa).

69 to 76 (GPESSGKT) lines the ATP pocket.

Belongs to the RecA family.

Its subcellular location is the cytoplasm. In terms of biological role, can catalyze the hydrolysis of ATP in the presence of single-stranded DNA, the ATP-dependent uptake of single-stranded DNA by duplex DNA, and the ATP-dependent hybridization of homologous single-stranded DNAs. It interacts with LexA causing its activation and leading to its autocatalytic cleavage. This is Protein RecA from Trichormus variabilis (strain ATCC 29413 / PCC 7937) (Anabaena variabilis).